Reading from the N-terminus, the 455-residue chain is Protein chibby homolog 2 (455 aa).

8 positions are modified to phosphoserine: S41, S86, S89, S97, S124, S144, S148, and S150. Positions 160–197 form a coiled coil; the sequence is KRLAKECLLQENKTLREENRALREENRMLRKENKILQV. Residues S211 and S225 each carry the phosphoserine modification. Positions 240–266 form a coiled coil; that stretch reads GRENSTLQLLREENRALQQLLEQRKAY. The disordered stretch occupies residues 267 to 318; sequence WAQPDEKAASTEEIKPISSPHEEPHGLLPDPGPGLPSPFEEPKGLPAPPDDS. Residues 270-291 are compositionally biased toward basic and acidic residues; sequence PDEKAASTEEIKPISSPHEEPH. Phosphoserine occurs at positions 276 and 332. Residues 350–421 adopt a coiled-coil conformation; sequence SQSLELLREM…KLKLQQKLVI (72 aa).

The protein belongs to the chibby family. SPERT subfamily. As to quaternary structure, homodimer. Binds to NEK1.

This Bos taurus (Bovine) protein is Protein chibby homolog 2 (CBY2).